Consider the following 179-residue polypeptide: tRNA (cytidine(56)-2'-O)-methyltransferase (179 aa).

S-adenosyl-L-methionine-binding positions include leucine 82, 112 to 116 (GAEKV), and 130 to 137 (VGNQPHSE).

The protein belongs to the aTrm56 family. As to quaternary structure, homodimer.

It is found in the cytoplasm. The enzyme catalyses cytidine(56) in tRNA + S-adenosyl-L-methionine = 2'-O-methylcytidine(56) in tRNA + S-adenosyl-L-homocysteine + H(+). Functionally, specifically catalyzes the AdoMet-dependent 2'-O-ribose methylation of cytidine at position 56 in tRNAs. This chain is tRNA (cytidine(56)-2'-O)-methyltransferase, found in Methanococcus maripaludis (strain DSM 14266 / JCM 13030 / NBRC 101832 / S2 / LL).